Here is a 112-residue protein sequence, read N- to C-terminus: Protein lin-52 homolog (112 aa).

Belongs to the lin-52 family. As to quaternary structure, component of the DREAM complex.

The polypeptide is Protein lin-52 homolog (lin52) (Danio rerio (Zebrafish)).